The following is a 39-amino-acid chain: LIM/homeobox protein xLIM-2B (39 aa).

Residues K1 to V39 constitute a DNA-binding region (homeobox).

It localises to the nucleus. The protein is LIM/homeobox protein xLIM-2B (lim2b) of Xenopus laevis (African clawed frog).